A 97-amino-acid polypeptide reads, in one-letter code: MICOS complex subunit MIC12 (97 aa).

Residues 7–24 (LTSITAVSSTLAASYYFY) traverse the membrane as a helical segment.

Belongs to the MICOS complex subunit Mic12 family. Component of the mitochondrial contact site and cristae organizing system (MICOS) complex.

Its subcellular location is the mitochondrion inner membrane. Component of the MICOS complex, a large protein complex of the mitochondrial inner membrane that plays crucial roles in the maintenance of crista junctions, inner membrane architecture, and formation of contact sites to the outer membrane. The chain is MICOS complex subunit MIC12 (AIM5) from Zygosaccharomyces rouxii (strain ATCC 2623 / CBS 732 / NBRC 1130 / NCYC 568 / NRRL Y-229).